An 86-amino-acid polypeptide reads, in one-letter code: Large ribosomal subunit protein bL27 (86 aa).

Residues 1–10 (MAQKKGGGST) are compositionally biased toward gly residues. The tract at residues 1–22 (MAQKKGGGSTRNGRDSESKRLG) is disordered.

This sequence belongs to the bacterial ribosomal protein bL27 family.

The chain is Large ribosomal subunit protein bL27 from Polynucleobacter asymbioticus (strain DSM 18221 / CIP 109841 / QLW-P1DMWA-1) (Polynucleobacter necessarius subsp. asymbioticus).